A 962-amino-acid chain; its full sequence is Protocadherin gamma-A4 (962 aa).

Residues 1 to 24 (MHFILDPEDPGAPQASTEGKPKHR) form a disordered region. The first 59 residues, 1–59 (MHFILDPEDPGAPQASTEGKPKHRRLRGGVVMAAPPARPDHTRLLQICLLLGVLVEIRA), serve as a signal peptide directing secretion. 6 consecutive Cadherin domains span residues 60–164 (EQIL…PPSF), 165–273 (GTEQ…APVF), 274–378 (TQPE…APEV), 379–483 (TVTS…PPTF), 484–598 (PHAS…YPTF), and 601–713 (DGST…KPSA). At 60-723 (EQILYSVFEE…DPDDSGLTLY (664 aa)) the chain is on the extracellular side. N-linked (GlcNAc...) asparagine glycosylation is found at N450 and N576. The chain crosses the membrane as a helical span at residues 724-744 (LVVAVAAVSCVFLAFVTVLLA). Residues 745–962 (LKLRRWHKSR…KKKSGKKEKK (218 aa)) lie on the Cytoplasmic side of the membrane. 2 disordered regions span residues 832-871 (KGDP…WPNN) and 932-962 (ATLT…KEKK). The segment covering 836–871 (NLQQAPPNTDWRFSQAQRPGTSGSQNGDDTGTWPNN) has biased composition (polar residues). Basic residues predominate over residues 952–962 (NKKKSGKKEKK).

Its subcellular location is the cell membrane. Functionally, potential calcium-dependent cell-adhesion protein. May be involved in the establishment and maintenance of specific neuronal connections in the brain. This chain is Protocadherin gamma-A4 (PCDHGA4), found in Homo sapiens (Human).